The primary structure comprises 436 residues: Prenyltransferase nscD (436 aa).

This sequence belongs to the tryptophan dimethylallyltransferase family.

It functions in the pathway secondary metabolite biosynthesis. Functionally, prenyltransferase; part of the gene cluster that mediates the biosynthesis of neosartoricin B, a prenylated anthracenone that probably exhibits T-cell antiproliferative activity, suggestive of a physiological role as an immunosuppressive agent. The non-reducing polyketide synthase nscA probably synthesizes and cyclizes the decaketide backbone. The hydrolase nscB then mediates the product release through hydrolysis followed by spontaneous decarboxylation. The prenyltransferase nscD catalyzes the addition of the dimethylallyl group to the aromatic C5. The FAD-dependent monooxygenase nscC is then responsible for the stereospecific hydroxylation at C2. Neosartoricin B can be converted into two additional compounds neosartoricins C and D. Neosartoricin C is a spirocyclic compound that is cyclized through the attack of C3 hydroxyl on C14, followed by dehydration. On the other hand, neosartoricin D is a further cyclized compound in which attack of C2 on C14 in neosartoricin C results in the formation of the acetal-containing dioxabicyclo-octanone ring. Both of these compounds are novel and possibly represent related metabolites of the gene cluster. The chain is Prenyltransferase nscD from Trichophyton equinum (strain ATCC MYA-4606 / CBS 127.97) (Horse ringworm fungus).